Consider the following 211-residue polypeptide: FMN-dependent NADH:quinone oxidoreductase 3 (211 aa).

Position 17–19 (17–19) interacts with FMN; sequence SFS.

It belongs to the azoreductase type 1 family. In terms of assembly, homodimer. FMN is required as a cofactor.

The catalysed reaction is 2 a quinone + NADH + H(+) = 2 a 1,4-benzosemiquinone + NAD(+). It carries out the reaction N,N-dimethyl-1,4-phenylenediamine + anthranilate + 2 NAD(+) = 2-(4-dimethylaminophenyl)diazenylbenzoate + 2 NADH + 2 H(+). Its function is as follows. Quinone reductase that provides resistance to thiol-specific stress caused by electrophilic quinones. Also exhibits azoreductase activity. Catalyzes the reductive cleavage of the azo bond in aromatic azo compounds to the corresponding amines. The chain is FMN-dependent NADH:quinone oxidoreductase 3 from Halalkalibacterium halodurans (strain ATCC BAA-125 / DSM 18197 / FERM 7344 / JCM 9153 / C-125) (Bacillus halodurans).